We begin with the raw amino-acid sequence, 236 residues long: Probable fimbrial chaperone EcpE (236 aa).

A signal peptide spans 1 to 27; the sequence is MFRRRGVTLTKALLTAVCMLAAPLTQA.

This sequence belongs to the EcpB/EcpE family.

In terms of biological role, part of the ecpRABCDE operon, which encodes the E.coli common pilus (ECP). ECP is found in both commensal and pathogenic strains and plays a dual role in early-stage biofilm development and host cell recognition. The protein is Probable fimbrial chaperone EcpE (ecpE) of Escherichia coli (strain K12).